The following is a 244-amino-acid chain: tRNA (guanine-N(1)-)-methyltransferase (244 aa).

Residues Gly113 and 133 to 138 (IGDYVL) each bind S-adenosyl-L-methionine.

Belongs to the RNA methyltransferase TrmD family. Homodimer.

The protein localises to the cytoplasm. The enzyme catalyses guanosine(37) in tRNA + S-adenosyl-L-methionine = N(1)-methylguanosine(37) in tRNA + S-adenosyl-L-homocysteine + H(+). Its function is as follows. Specifically methylates guanosine-37 in various tRNAs. The protein is tRNA (guanine-N(1)-)-methyltransferase of Bacillus cereus (strain G9842).